The sequence spans 1120 residues: Prophage side tail fiber protein homolog StfR (1120 aa).

Disordered regions lie at residues Lys129–Ala154, Ser221–Ala442, and Ser960–His1021. Low complexity-rich tracts occupy residues Ser221 to Ala239, Ser248 to Ala395, and Arg402 to Ala442. Residues Asp985–His1021 show a composition bias toward polar residues.

The protein belongs to the tail fiber family.

The sequence is that of Prophage side tail fiber protein homolog StfR (stfR) from Escherichia coli (strain K12).